The primary structure comprises 203 residues: Protein GrpE (203 aa).

The segment covering 1-20 (MSSKEQNVHEEQVSKEKEGM) has biased composition (basic and acidic residues). A disordered region spans residues 1-38 (MSSKEQNVHEEQVSKEKEGMESVMNESQEQVKSEDAQA).

It belongs to the GrpE family. In terms of assembly, homodimer.

Its subcellular location is the cytoplasm. Its function is as follows. Participates actively in the response to hyperosmotic and heat shock by preventing the aggregation of stress-denatured proteins, in association with DnaK and GrpE. It is the nucleotide exchange factor for DnaK and may function as a thermosensor. Unfolded proteins bind initially to DnaJ; upon interaction with the DnaJ-bound protein, DnaK hydrolyzes its bound ATP, resulting in the formation of a stable complex. GrpE releases ADP from DnaK; ATP binding to DnaK triggers the release of the substrate protein, thus completing the reaction cycle. Several rounds of ATP-dependent interactions between DnaJ, DnaK and GrpE are required for fully efficient folding. This chain is Protein GrpE, found in Proteus mirabilis (strain HI4320).